We begin with the raw amino-acid sequence, 146 residues long: Decarboxylase dmxR15 (146 aa).

The 96-residue stretch at 31-126 (PGMSEGDYRN…MHDHEVFADT (96 aa)) folds into the EthD domain.

It belongs to the tpcK family.

The catalysed reaction is atrochrysone carboxylate + H(+) = atrochrysone + CO2. It functions in the pathway secondary metabolite biosynthesis. Its function is as follows. Decarboxylase; part of the gene cluster that mediates the biosynthesis of the dimeric xanthones cryptosporioptides. The pathway begins with the synthesis of atrochrysone thioester by the polyketide synthase dmx-nrPKS. The atrochrysone carboxyl ACP thioesterase dmxR1 then breaks the thioester bond and releases the atrochrysone carboxylic acid from dmx-nrPKS. Atrochrysone carboxylic acid is decarboxylated by the decarboxylase dmxR15, and oxidized by the anthrone oxygenase dmxR16 to yield emodin. Emodin is then reduced to emodin hydroquinone by the oxidoreductase dmxR7. A-ring reduction by the short chain dehydrogenase dmxR18, dehydration by the scytalone dehydratase-like protein dmxR17 and probable spontaneous re-oxidation, results in overall deoxygenation to chrysophanol. Baeyer-Villiger oxidation by the Baeyer-Villiger monooxygenase (BVMO) dmxR6 then yields monodictylactone in equilibrium with monodictyphenone. In the case of the cryptosporioptides biosynthesis, monodictylactone is reduced at C-12 to an alcohol (by the short chain dehydrogenases dmxR12 or dmxR8) and hydroxylated at C-5 by dmxR9, yielding the electron-rich aromatic which could eliminate H(2)O to form the ortho-quinonemethide, followed by tautomerisation to paraquinone and complete the formal reduction to produce the 10-methylgroup. Conjugate addition of C-4a-OH to the resulting paraquinone by the monooxygenase dmxR10 then gives cyclohexadienone, which is then reduced at C-5 by the short chain dehydrogenase dmxR3 to give the dihydroxanthone. The 6,7-epoxide in the cryptosporioptides could be introduced by the cytochrome P450 monooxygenase dmxL3. The highly reducing PKS dmxL2 manufactures butyrate, which is further carboxylated by dmxL1 to form ethylmalonate. It is not yet clear whether the carboxylation occurs while the butyrate is attached to the ACP of dmxL2, but this unusual fungal metabolite could then be esterified to O-5 by the O-acetyltransferase dmxR13. Finally, dimerization performed by dmxR5 gives the observed dimers cryptosporioptides A, B and C as the final products of the pathway. The sequence is that of Decarboxylase dmxR15 from Cryptosporiopsis sp. (strain 8999).